A 443-amino-acid polypeptide reads, in one-letter code: Methyl-coenzyme M reductase I subunit beta (443 aa).

Tyr367 lines the coenzyme M pocket. Residue Gly369 coordinates coenzyme B.

This sequence belongs to the methyl-coenzyme M reductase beta subunit family. As to quaternary structure, MCR is a hexamer of two alpha, two beta, and two gamma chains, forming a dimer of heterotrimers. Coenzyme F430 is required as a cofactor.

The protein resides in the cytoplasm. The enzyme catalyses coenzyme B + methyl-coenzyme M = methane + coenzyme M-coenzyme B heterodisulfide. It functions in the pathway one-carbon metabolism; methyl-coenzyme M reduction; methane from methyl-coenzyme M: step 1/1. In terms of biological role, component of the methyl-coenzyme M reductase (MCR) I that catalyzes the reductive cleavage of methyl-coenzyme M (CoM-S-CH3 or 2-(methylthio)ethanesulfonate) using coenzyme B (CoB or 7-mercaptoheptanoylthreonine phosphate) as reductant which results in the production of methane and the mixed heterodisulfide of CoB and CoM (CoM-S-S-CoB). This is the final step in methanogenesis. The sequence is that of Methyl-coenzyme M reductase I subunit beta (mcrB) from Methanothermobacter thermautotrophicus (strain ATCC 29096 / DSM 1053 / JCM 10044 / NBRC 100330 / Delta H) (Methanobacterium thermoautotrophicum).